A 58-amino-acid polypeptide reads, in one-letter code: Isocitrate lyase (58 aa).

This sequence belongs to the isocitrate lyase/PEP mutase superfamily. Isocitrate lyase family. In terms of assembly, homotetramer. The cofactor is Mg(2+).

Its subcellular location is the glyoxysome. The catalysed reaction is D-threo-isocitrate = glyoxylate + succinate. Its pathway is carbohydrate metabolism; glyoxylate cycle; (S)-malate from isocitrate: step 1/2. Involved in storage lipid mobilization during the growth of higher plant seedling. This is Isocitrate lyase from Helianthus annuus (Common sunflower).